Consider the following 240-residue polypeptide: UDP-2,3-diacylglucosamine hydrolase (240 aa).

Positions 8, 10, 41, 79, and 114 each coordinate Mn(2+). 79 to 80 (NR) is a substrate binding site. The substrate site is built by aspartate 122, serine 160, asparagine 164, lysine 167, and histidine 195. Residues histidine 195 and histidine 197 each contribute to the Mn(2+) site.

It belongs to the LpxH family. Mn(2+) serves as cofactor.

It is found in the cell inner membrane. It catalyses the reaction UDP-2-N,3-O-bis[(3R)-3-hydroxytetradecanoyl]-alpha-D-glucosamine + H2O = 2-N,3-O-bis[(3R)-3-hydroxytetradecanoyl]-alpha-D-glucosaminyl 1-phosphate + UMP + 2 H(+). It participates in glycolipid biosynthesis; lipid IV(A) biosynthesis; lipid IV(A) from (3R)-3-hydroxytetradecanoyl-[acyl-carrier-protein] and UDP-N-acetyl-alpha-D-glucosamine: step 4/6. Its function is as follows. Hydrolyzes the pyrophosphate bond of UDP-2,3-diacylglucosamine to yield 2,3-diacylglucosamine 1-phosphate (lipid X) and UMP by catalyzing the attack of water at the alpha-P atom. Involved in the biosynthesis of lipid A, a phosphorylated glycolipid that anchors the lipopolysaccharide to the outer membrane of the cell. The polypeptide is UDP-2,3-diacylglucosamine hydrolase (Escherichia coli O6:K15:H31 (strain 536 / UPEC)).